The chain runs to 402 residues: S-adenosylmethionine synthase (402 aa).

Position 15 (H15) interacts with ATP. D17 is a binding site for Mg(2+). E43 is a K(+) binding site. Residues E56 and Q99 each coordinate L-methionine. The segment at 99 to 109 (QSPDIAQGVDT) is flexible loop. ATP contacts are provided by residues 174–176 (DGK), 247–248 (RF), D256, 262–263 (RK), A279, and K283. L-methionine is bound at residue D256. K287 contacts L-methionine.

The protein belongs to the AdoMet synthase family. Homotetramer; dimer of dimers. Mg(2+) is required as a cofactor. Requires K(+) as cofactor.

It is found in the cytoplasm. The enzyme catalyses L-methionine + ATP + H2O = S-adenosyl-L-methionine + phosphate + diphosphate. It participates in amino-acid biosynthesis; S-adenosyl-L-methionine biosynthesis; S-adenosyl-L-methionine from L-methionine: step 1/1. Functionally, catalyzes the formation of S-adenosylmethionine (AdoMet) from methionine and ATP. The overall synthetic reaction is composed of two sequential steps, AdoMet formation and the subsequent tripolyphosphate hydrolysis which occurs prior to release of AdoMet from the enzyme. This chain is S-adenosylmethionine synthase, found in Streptomyces avermitilis (strain ATCC 31267 / DSM 46492 / JCM 5070 / NBRC 14893 / NCIMB 12804 / NRRL 8165 / MA-4680).